We begin with the raw amino-acid sequence, 365 residues long: Endophilin-B1 (365 aa).

M1 is subject to N-acetylmethionine. A membrane-binding amphipathic helix region spans residues 1 to 30 (MNIMDFNVKKLAADAGTFLSRAVQFTEEKL). Residues 1 to 37 (MNIMDFNVKKLAADAGTFLSRAVQFTEEKLGQAEKTE) are required for membrane binding. A BAR domain is found at 27 to 261 (EEKLGQAEKT…LGSFPSNYLS (235 aa)). T145 is modified (phosphothreonine; by CDK5). Positions 155–186 (YKTIAKERKLLQNKRLDLDAAKTRLKKAKAAE) form a coiled coil. Residues 305–365 (SNNRKARVLY…VPITYLELLN (61 aa)) enclose the SH3 domain.

The protein belongs to the endophilin family. In terms of assembly, homodimer, and heterodimer with SH3GLB2. Binds BAX; induction of apoptosis augments BAX binding. Binds DNM1, HTT, AMPH, BIN1 and ARFGAP1. Interacts with UVRAG; UVRAG bridges the interaction to BECN1 indicative for an association with the PI3K complex II (PI3KC3-C2). Isoform 3 interacts with PPP1CC; this interaction leads to the inhibition of phosphatase activity. Post-translationally, phosphorylated at Thr-145 by CDK5; this phosphorylation is required for autophagy induction in starved neurons and facilitates homodimerization. Isoform 1 is widely expressed. Isoform 2 is brain-specific. Isoform 3 is predominantly expressed in testis, but it is also detected in liver and, at much lower levels, in skin, stomach and ovary.

The protein resides in the cytoplasm. Its subcellular location is the golgi apparatus membrane. It localises to the mitochondrion outer membrane. It is found in the cytoplasmic vesicle. The protein localises to the autophagosome membrane. The protein resides in the midbody. Its function is as follows. May be required for normal outer mitochondrial membrane dynamics. Required for coatomer-mediated retrograde transport in certain cells. May recruit other proteins to membranes with high curvature. May promote membrane fusion. Involved in activation of caspase-dependent apoptosis by promoting BAX/BAK1 activation. Isoform 1 acts proapoptotic in fibroblasts. Involved in caspase-independent apoptosis during nutrition starvation and involved in the regulation of autophagy. Activates lipid kinase activity of PIK3C3 during autophagy probably by associating with the PI3K complex II (PI3KC3-C2). Associated with PI3KC3-C2 during autophagy may regulate the trafficking of ATG9A from the Golgi complex to the peripheral cytoplasm for the formation of autophagosomes by inducing Golgi membrane tubulation and fragmentation. Involved in regulation of degradative endocytic trafficking and cytokinesis, probably in the context of PI3KC3-C2. Isoform 2 acts antiapoptotic in neuronal cells; involved in maintenance of mitochondrial morphology and promotes neuronal viability. This Mus musculus (Mouse) protein is Endophilin-B1 (Sh3glb1).